Consider the following 443-residue polypeptide: MATYQEYKSRSNGNAYDIDGSFGAQCWDGYADYCKYLGLPYANCTNTGYARDIWEQRHENGILNYFDEVEVMQAGDVAIFMVVDGVTPYSHVAIFDSDAGGGYGWFLGQNQGGANGAYNLVKIPYSATYPTAFRPKSFKNAVTVTDNTGLNKGDYFIDVSAYQQADLTTTCQQAGTTKTIIKVSESIAWLSDRHQQQANTSDPIGYYHFGRFGGDSALAQREADLFLSNLPSKKVSYLVIDYEDSASADKQANTNAVIAFMDKIASAGYKPIYYSYKPFTLNNIDYQKIIAKYPNSIWIAGYPDYEVRTEPLWEFFPSMDGVRWWQFTSVGVAGGLDKNIVLLADDSSKMDIPKVDKPQELTFYQKLATNTKLDNSNVPYYEATLSTDYYVESKPNASSADKEFIKAGTRVRVYEKVNGWSRINHPESAQWVEDNYLVNATDM.

In terms of domain architecture, Peptidase C51 spans 1–131; sequence MATYQEYKSR…KIPYSATYPT (131 aa). Cys-26 (nucleophile) is an active-site residue. The Increases nucleophilicity of active site cys; for D-alanyl-L-alanine endopeptidase activity role is filled by His-91. Positions 145–344 are acm domain; it reads TDNTGLNKGD…GLDKNIVLLA (200 aa). The region spanning 380–441 is the SH3b domain; it reads YYEATLSTDY…VEDNYLVNAT (62 aa).

Belongs to the glycosyl hydrolase 25 family.

It carries out the reaction Hydrolysis of (1-&gt;4)-beta-linkages between N-acetylmuramic acid and N-acetyl-D-glucosamine residues in a peptidoglycan and between N-acetyl-D-glucosamine residues in chitodextrins.. With respect to regulation, ca++ enhances the activity of the enzyme. Functionally, the endopeptidase activity cleaves the bacterial peptidoglycan between D-alanine and L-alanine. The N-acetyl-muramidase activity cleaves between N-acetylmuramic acid and N-acetylglucosamine bonds. This chain is D-alanyl-L-alanine endopeptidase, found in Streptococcus agalactiae (Streptococcus agalactiae bacteriophage B30).